A 373-amino-acid polypeptide reads, in one-letter code: Histidinol-phosphate aminotransferase 2 (373 aa).

Residue lysine 229 is modified to N6-(pyridoxal phosphate)lysine.

The protein belongs to the class-II pyridoxal-phosphate-dependent aminotransferase family. Histidinol-phosphate aminotransferase subfamily. Homodimer. The cofactor is pyridoxal 5'-phosphate.

It carries out the reaction L-histidinol phosphate + 2-oxoglutarate = 3-(imidazol-4-yl)-2-oxopropyl phosphate + L-glutamate. It functions in the pathway amino-acid biosynthesis; L-histidine biosynthesis; L-histidine from 5-phospho-alpha-D-ribose 1-diphosphate: step 7/9. This Hydrogenovibrio crunogenus (strain DSM 25203 / XCL-2) (Thiomicrospira crunogena) protein is Histidinol-phosphate aminotransferase 2.